The following is a 267-amino-acid chain: 3-methyl-2-oxobutanoate hydroxymethyltransferase (267 aa).

Positions 46 and 85 each coordinate Mg(2+). 3-methyl-2-oxobutanoate-binding positions include aspartate 46–serine 47, aspartate 85, and lysine 115. Mg(2+) is bound at residue glutamate 117. Residue glutamate 184 is the Proton acceptor of the active site.

The protein belongs to the PanB family. Homodecamer; pentamer of dimers. It depends on Mg(2+) as a cofactor.

The protein resides in the cytoplasm. It carries out the reaction 3-methyl-2-oxobutanoate + (6R)-5,10-methylene-5,6,7,8-tetrahydrofolate + H2O = 2-dehydropantoate + (6S)-5,6,7,8-tetrahydrofolate. Its pathway is cofactor biosynthesis; (R)-pantothenate biosynthesis; (R)-pantoate from 3-methyl-2-oxobutanoate: step 1/2. Its function is as follows. Catalyzes the reversible reaction in which hydroxymethyl group from 5,10-methylenetetrahydrofolate is transferred onto alpha-ketoisovalerate to form ketopantoate. The sequence is that of 3-methyl-2-oxobutanoate hydroxymethyltransferase from Geotalea uraniireducens (strain Rf4) (Geobacter uraniireducens).